A 535-amino-acid chain; its full sequence is Phosphoenolpyruvate carboxykinase (ATP) (535 aa).

Residues Arg59, Tyr201, and Lys207 each coordinate substrate. ATP-binding positions include Lys207, His226, and 243–251 (GLSGTGKTT). Mn(2+)-binding residues include Lys207 and His226. Residue Asp264 coordinates Mn(2+). ATP contacts are provided by residues Glu292, Arg328, 444 to 445 (RI), and Thr450. Arg328 lines the substrate pocket.

This sequence belongs to the phosphoenolpyruvate carboxykinase (ATP) family. Mn(2+) is required as a cofactor.

Its subcellular location is the cytoplasm. It carries out the reaction oxaloacetate + ATP = phosphoenolpyruvate + ADP + CO2. Its pathway is carbohydrate biosynthesis; gluconeogenesis. Functionally, involved in the gluconeogenesis. Catalyzes the conversion of oxaloacetate (OAA) to phosphoenolpyruvate (PEP) through direct phosphoryl transfer between the nucleoside triphosphate and OAA. This Porphyromonas gingivalis (strain ATCC 33277 / DSM 20709 / CIP 103683 / JCM 12257 / NCTC 11834 / 2561) protein is Phosphoenolpyruvate carboxykinase (ATP).